We begin with the raw amino-acid sequence, 273 residues long: MNREIMLIFGTAGVPISAEDEFKAVDVLRKLNLGAMELEFVKGVYMKEDYAKKLKEYGEDIIFSAHAPHYINLNANEEEKVENSIRRIIKTAKVLNNCGKNLVFHPGYYLKRSKEVTYNRIKSNIQRILDKLEALNLNVMLRPETTGKTTQFGDIDETLKLCFELNILPCIDFSHIYARSRGVINDYNSFYKILEKVENVLGKEAIKDMHIHLSGIEYGKGGERRHLPLNESNFNYRDVLKALKDFDASGTVICESPMLEYDAVLLMKCYNEL.

This is an uncharacterized protein from Methanocaldococcus jannaschii (strain ATCC 43067 / DSM 2661 / JAL-1 / JCM 10045 / NBRC 100440) (Methanococcus jannaschii).